A 149-amino-acid chain; its full sequence is MGLEKSLILLPLLVLVLAWVQPSLGKETPAMKFERQHMDSAGSSSSSPTYCNQMMKRREMTKGSCKRVNTFVHEPLADVQAVCSQKNVTCKNGKKNCYKSRSALTITDCRLKGNSKYPDCDYQTSHQQKHIIVACEGSPYVPVHFDASV.

The N-terminal stretch at 1 to 25 (MGLEKSLILLPLLVLVLAWVQPSLG) is a signal peptide. Substrate-binding residues include Lys32 and Arg35. His37 serves as the catalytic Proton acceptor. 4 disulfides stabilise this stretch: Cys51–Cys109, Cys65–Cys120, Cys83–Cys135, and Cys90–Cys97. Residue 66–70 (KRVNT) coordinates substrate. Asn87 is a glycosylation site (N-linked (GlcNAc...) asparagine). Substrate-binding residues include Lys91 and Arg110. His144 acts as the Proton donor in catalysis.

It belongs to the pancreatic ribonuclease family. Monomer. Interacts with and forms tight 1:1 complexes with RNH1. Dimerization of two such complexes may occur. Interaction with RNH1 inhibits this protein. Pancreas.

The protein localises to the secreted. It catalyses the reaction an [RNA] containing cytidine + H2O = an [RNA]-3'-cytidine-3'-phosphate + a 5'-hydroxy-ribonucleotide-3'-[RNA].. The catalysed reaction is an [RNA] containing uridine + H2O = an [RNA]-3'-uridine-3'-phosphate + a 5'-hydroxy-ribonucleotide-3'-[RNA].. Functionally, endonuclease that catalyzes the cleavage of RNA on the 3' side of pyrimidine nucleotides. Acts on single-stranded and double-stranded RNA. This Acomys cahirinus (Cairo spiny mouse) protein is Ribonuclease pancreatic (RNASE1).